The primary structure comprises 315 residues: MAAPEVLESDVSSSITLLKNLQEQVMAVTAQIQALTTKVRAGTYSTEKGLSFLEVKDQLLLMYLMDLSHLILDKASGASLQGHPAVLRLVEIRTVLEKLRPLDQKLKYQIDKLVKTAVTGSLSENDPLRFKPHPSNMVSKLSSEDEEESEAEEGQSEASGKKSAKGSAKKYVPPRLVPVHYDETEAEREQKRLEKAKRRALSSSVIRELKEQYSDAPEEIRDARHPHVTRQSQEDQHRVNYEESMMVRLSVSKREKGLRRRASAMSSQLHSLTHFSDISALTGGTAHLDEDQNPVKKRKKLPKKGRKKKGFRRRW.

Position 2 is an N-acetylalanine (Ala2). Residues 7–41 (LESDVSSSITLLKNLQEQVMAVTAQIQALTTKVRA) are a coiled coil. The necessary for interaction with EIF4E stretch occupies residues 41–174 (AGTYSTEKGL…KGSAKKYVPP (134 aa)). 3 positions are modified to phosphoserine: Ser121, Ser142, and Ser143. Residues 123 to 190 (SENDPLRFKP…YDETEAEREQ (68 aa)) form a disordered region. Residues 144–155 (EDEEESEAEEGQ) are compositionally biased toward acidic residues. A compositionally biased stretch (basic and acidic residues) spans 180-190 (HYDETEAEREQ). A coiled-coil region spans residues 181–203 (YDETEAEREQKRLEKAKRRALSS). A phosphoserine mark is found at Ser204 and Ser214. Composition is skewed to basic and acidic residues over residues 212-225 (QYSD…DARH) and 232-241 (SQEDQHRVNY). 2 disordered regions span residues 212 to 243 (QYSD…NYEE) and 284 to 315 (GTAH…RRRW). Residues 295–315 (VKKRKKLPKKGRKKKGFRRRW) are compositionally biased toward basic residues.

This sequence belongs to the SAS10 family. As to quaternary structure, interacts with CPEB1 and EIF4E. Expressed in testis, ovary, spleen, kidney, hippocampus and cerebellum (at protein level). Expressed in testis, ovary, spleen, kidney, brain.

It is found in the nucleus. Its subcellular location is the nucleolus. It localises to the chromosome. The protein resides in the centromere. The protein localises to the cytoplasm. It is found in the cell projection. Its subcellular location is the axon. It localises to the dendrite. The protein resides in the filopodium. Functionally, part of the small subunit (SSU) processome, first precursor of the small eukaryotic ribosomal subunit. During the assembly of the SSU processome in the nucleolus, many ribosome biogenesis factors, an RNA chaperone and ribosomal proteins associate with the nascent pre-rRNA and work in concert to generate RNA folding, modifications, rearrangements and cleavage as well as targeted degradation of pre-ribosomal RNA by the RNA exosome. Its dissociation from the complex determines the transition from state pre-A1 to state pre-A1*. Inhibits mRNA translation in a cytoplasmic polyadenylation element (CPE)-dependent manner. This chain is Neuroguidin (Ngdn), found in Mus musculus (Mouse).